The chain runs to 122 residues: Large ribosomal subunit protein uL14 (122 aa).

Belongs to the universal ribosomal protein uL14 family. Part of the 50S ribosomal subunit. Forms a cluster with proteins L3 and L19. In the 70S ribosome, L14 and L19 interact and together make contacts with the 16S rRNA in bridges B5 and B8.

Binds to 23S rRNA. Forms part of two intersubunit bridges in the 70S ribosome. The protein is Large ribosomal subunit protein uL14 of Citrifermentans bemidjiense (strain ATCC BAA-1014 / DSM 16622 / JCM 12645 / Bem) (Geobacter bemidjiensis).